The following is a 340-amino-acid chain: Guanine nucleotide-binding protein G(I)/G(S)/G(T) subunit beta-3 (340 aa).

7 WD repeats span residues 53–83 (GHLA…IVWD), 95–125 (LRSS…SIYN), 141–170 (AHTG…ALWD), 182–212 (GHTG…KLWD), 224–254 (GHES…RLFD), 268–298 (SIIC…NVWD), and 310–340 (GHDN…KIWN).

It belongs to the WD repeat G protein beta family. In terms of assembly, g proteins are composed of 3 units, alpha, beta and gamma. Interacts with RASD2.

In terms of biological role, guanine nucleotide-binding proteins (G proteins) are involved as a modulator or transducer in various transmembrane signaling systems. The beta and gamma chains are required for the GTPase activity, for replacement of GDP by GTP, and for G protein-effector interaction. The polypeptide is Guanine nucleotide-binding protein G(I)/G(S)/G(T) subunit beta-3 (GNB3) (Homo sapiens (Human)).